The following is a 405-amino-acid chain: NADH-quinone oxidoreductase subunit D (405 aa).

This sequence belongs to the complex I 49 kDa subunit family. NDH-1 is composed of 14 different subunits. Subunits NuoB, C, D, E, F, and G constitute the peripheral sector of the complex.

It is found in the cell inner membrane. The catalysed reaction is a quinone + NADH + 5 H(+)(in) = a quinol + NAD(+) + 4 H(+)(out). Functionally, NDH-1 shuttles electrons from NADH, via FMN and iron-sulfur (Fe-S) centers, to quinones in the respiratory chain. The immediate electron acceptor for the enzyme in this species is believed to be ubiquinone. Couples the redox reaction to proton translocation (for every two electrons transferred, four hydrogen ions are translocated across the cytoplasmic membrane), and thus conserves the redox energy in a proton gradient. The chain is NADH-quinone oxidoreductase subunit D from Leptospira interrogans serogroup Icterohaemorrhagiae serovar copenhageni (strain Fiocruz L1-130).